A 107-amino-acid polypeptide reads, in one-letter code: Sperm protamine P1 (107 aa).

Composition is skewed to basic and acidic residues over residues 1-10 (ALRKVDRNRF) and 20-33 (REAK…EFPG). The propeptide at 1–35 (ALRKVDRNRFVLDNVTPQPREAKRYKEEEEFPGHG) is removed in mature form. The disordered stretch occupies residues 1–107 (ALRKVDRNRF…RRRRRGKKGK (107 aa)). Over residues 34–107 (HGRRRRRRSK…RRRRRGKKGK (74 aa)) the composition is skewed to basic residues. At S42 the chain carries Phosphoserine.

A series of N-terminal cleavages yield the mature protein. In terms of processing, only the mature protein is phosphorylated. As to expression, gonads.

Its subcellular location is the nucleus. The protein resides in the chromosome. Its function is as follows. Protamines substitute for histones in the chromatin of sperm during the haploid phase of spermatogenesis. They compact sperm DNA into a highly condensed, stable and inactive complex. This is Sperm protamine P1 from Bolinus brandaris (Purple dye murex).